Consider the following 213-residue polypeptide: Charged multivesicular body protein 2b (213 aa).

Residue alanine 2 is modified to N-acetylalanine. Residues 25 to 55 (QRAIIRDRAALEKQEKQLELEIKKMAKIGNK) are a coiled coil. Positions 179–194 (AKAPSAARSLPSASTS) are enriched in low complexity. The interval 179–199 (AKAPSAARSLPSASTSKATIS) is disordered. Residue serine 199 is modified to Phosphoserine. An MIT-interacting motif motif is present at residues 201 to 211 (EEIERQLKALG).

Belongs to the SNF7 family. In terms of assembly, probable core component of the endosomal sorting required for transport complex III (ESCRT-III). ESCRT-III components are thought to multimerize to form a flat lattice on the perimeter membrane of the endosome. Several assembly forms of ESCRT-III may exist that interact and act sequentially. Interacts with CHMP2A. Interacts with VPS4A. Interacts with VPS4B; the interaction is direct. In terms of tissue distribution, widely expressed. Expressed in brain, heart, skeletal muscle, spleen, kidney, liver, small intestine, pancreas, lung, placenta and leukocytes. In brain, it is expressed in cerebellum, cerebral cortex, medulla, spinal cord, occipital lobe, frontal lobe, temporal lobe and putamen.

It is found in the cytoplasm. Its subcellular location is the cytosol. The protein localises to the late endosome membrane. Probable core component of the endosomal sorting required for transport complex III (ESCRT-III) which is involved in multivesicular bodies (MVBs) formation and sorting of endosomal cargo proteins into MVBs. MVBs contain intraluminal vesicles (ILVs) that are generated by invagination and scission from the limiting membrane of the endosome and mostly are delivered to lysosomes enabling degradation of membrane proteins, such as stimulated growth factor receptors, lysosomal enzymes and lipids. The MVB pathway appears to require the sequential function of ESCRT-O, -I,-II and -III complexes. ESCRT-III proteins mostly dissociate from the invaginating membrane before the ILV is released. The ESCRT machinery also functions in topologically equivalent membrane fission events, such as the terminal stages of cytokinesis and the budding of enveloped viruses (HIV-1 and other lentiviruses). ESCRT-III proteins are believed to mediate the necessary vesicle extrusion and/or membrane fission activities, possibly in conjunction with the AAA ATPase VPS4. The protein is Charged multivesicular body protein 2b (CHMP2B) of Homo sapiens (Human).